A 133-amino-acid polypeptide reads, in one-letter code: MRMSLAQRVLLTWLFTLLFLIMLVLKLDEKAPWNWFLIFIPVWIFDTILLVMLIVKMAGRCKSGFDPRHGSHNIKKKAWYLIAMLLKLAFCLALCAKLEQFTTMNLSYVFIPLWALLAGALTELGYNVFFVRD.

4 consecutive transmembrane segments (helical) span residues 5–25, 35–55, 78–98, and 110–130; these read LAQR…MLVL, WFLI…MLIV, AWYL…CAKL, and FIPL…NVFF.

It localises to the membrane. This is Transmembrane protein 60 (Tmem60) from Mus musculus (Mouse).